Consider the following 1048-residue polypeptide: 3-hydroxy-3-methylglutaryl-coenzyme A reductase (1048 aa).

The Cytoplasmic segment spans residues methionine 1 to proline 32. A helical transmembrane segment spans residues isoleucine 33 to glycine 53. Residues threonine 54–threonine 220 are Lumenal-facing. The helical transmembrane segment at valine 221–phenylalanine 241 threads the bilayer. The 182-residue stretch at aspartate 222–valine 403 folds into the SSD domain. Residues arginine 242–arginine 250 lie on the Cytoplasmic side of the membrane. A helical transmembrane segment spans residues phenylalanine 251–isoleucine 271. Topologically, residues threonine 272–aspartate 276 are lumenal. Residues valine 277–phenylalanine 297 traverse the membrane as a helical segment. Over glutamate 298 to glutamate 348 the chain is Cytoplasmic. Residues glycine 349–leucine 369 form a helical membrane-spanning segment. Topologically, residues arginine 370–histidine 377 are lumenal. Residues phenylalanine 378–alanine 398 traverse the membrane as a helical segment. Topologically, residues threonine 399–tryptophan 439 are cytoplasmic. Residues tryptophan 440–phenylalanine 460 form a helical membrane-spanning segment. Over tyrosine 461–arginine 542 the chain is Lumenal. Residues asparagine 470 and asparagine 520 are each glycosylated (N-linked (GlcNAc...) asparagine). Residues leucine 543–alanine 563 traverse the membrane as a helical segment. Over arginine 564–lysine 1048 the chain is Cytoplasmic. Glutamate 729 functions as the Charge relay system in the catalytic mechanism. Serine 735 to lysine 741 is a CoA binding site. NADP(+) contacts are provided by residues serine 796 to phenylalanine 798 and aspartate 823 to serine 831. Lysine 863 serves as the catalytic Charge relay system. CoA is bound at residue valine 892–lysine 894. The Charge relay system role is filled by aspartate 939. Position 1034–1035 (alanine 1034–histidine 1035) interacts with CoA. Histidine 1035 (proton donor) is an active-site residue. Asparagine 1039 to arginine 1040 serves as a coordination point for NADP(+).

It belongs to the HMG-CoA reductase family.

It is found in the endoplasmic reticulum membrane. It carries out the reaction (R)-mevalonate + 2 NADP(+) + CoA = (3S)-3-hydroxy-3-methylglutaryl-CoA + 2 NADPH + 2 H(+). The protein operates within metabolic intermediate biosynthesis; (R)-mevalonate biosynthesis; (R)-mevalonate from acetyl-CoA: step 3/3. HMG-CoA reductase; part of the first module of ergosterol biosynthesis pathway that includes the early steps of the pathway, conserved across all eukaryotes, and which results in the formation of mevalonate from acetyl-coenzyme A (acetyl-CoA). In this module, the cytosolic acetyl-CoA acetyltransferase catalyzes the formation of acetoacetyl-CoA. The hydroxymethylglutaryl-CoA synthase then condenses acetyl-CoA with acetoacetyl-CoA to form HMG-CoA. The rate-limiting step of the early module is the reduction to mevalonate by the 3-hydroxy-3-methylglutaryl-coenzyme A (HMG-CoA) reductase. In Aspergillus terreus, this protein is 3-hydroxy-3-methylglutaryl-coenzyme A reductase.